Reading from the N-terminus, the 388-residue chain is Alpha-2A adrenergic receptor (388 aa).

Topologically, residues 1-22 are extracellular; sequence MICGANATNGTNATKEYTLLVA. Residues Asn6, Asn9, and Asn12 are each glycosylated (N-linked (GlcNAc...) asparagine). A helical transmembrane segment spans residues 23-48; that stretch reads LPLSIAVGLLILLIIFGNVLVIIAVF. Residues 49–59 lie on the Cytoplasmic side of the membrane; it reads TSRALRAPQNL. The chain crosses the membrane as a helical span at residues 60–85; it reads FLVSLASADILVATLVMPFSLANELM. The Extracellular segment spans residues 86–95; sequence GMWTFGGVWC. A disulfide bridge connects residues Cys95 and Cys169. The helical transmembrane segment at 96–118 threads the bilayer; sequence EIYLALDVLFCTASITHLCAISL. The Cytoplasmic segment spans residues 119-138; the sequence is DRYWSITQAIEYNLKRTPQR. The helical transmembrane segment at 139 to 162 threads the bilayer; the sequence is IKRIIFIVWIIAAVISCPPLITMK. Topologically, residues 163-173 are extracellular; it reads KSEGDICDINK. A helical transmembrane segment spans residues 174 to 198; it reads EKWYIVSSCIGSFFLPCIIMVLVYI. The Cytoplasmic segment spans residues 199–311; sequence RIYQIAKKRT…RQNREKRFTF (113 aa). Positions 208–291 are disordered; it reads TRAPPGDHRK…PGDGDKTEAC (84 aa). Positions 212–231 are enriched in basic and acidic residues; that stretch reads PGDHRKNEVGKKENDPHEKL. Residues 266-275 show a composition bias toward basic residues; that stretch reads LKKKSSKGKT. The helical transmembrane segment at 312–337 threads the bilayer; that stretch reads VLAVVIGVFVICWFPFFFTYTFTAFC. The Extracellular portion of the chain corresponds to 338–344; it reads DCCVPET. Residues 345–368 form a helical membrane-spanning segment; it reads LFKFFFWFGYCNSSLNPIIYTIFN. Over 369–388 the chain is Cytoplasmic; that stretch reads NDFRRSFKKILCRRDKRRVV. A lipid anchor (S-palmitoyl cysteine) is attached at Cys380.

Belongs to the G-protein coupled receptor 1 family. Adrenergic receptor subfamily. ADRA2A sub-subfamily.

The protein resides in the cell membrane. Alpha-2 adrenergic receptors mediate the catecholamine-induced inhibition of adenylate cyclase through the action of G proteins. The order of potency for this receptor is dexmedetomidine &gt; oxymetazoline = epinephrine &gt; norepinephrine. This is Alpha-2A adrenergic receptor from Danio rerio (Zebrafish).